A 135-amino-acid polypeptide reads, in one-letter code: Large ribosomal subunit protein uL16c (135 aa).

This sequence belongs to the universal ribosomal protein uL16 family. As to quaternary structure, part of the 50S ribosomal subunit.

It localises to the plastid. The protein localises to the chloroplast. This is Large ribosomal subunit protein uL16c from Drimys granadensis.